Consider the following 210-residue polypeptide: Somatotropin (210 aa).

Positions 1-22 (MGQVFLLMPVLLVSCFLSQGAA) are cleaved as a signal peptide. His-38 lines the Zn(2+) pocket. Cys-71 and Cys-183 are joined by a disulfide. Glu-192 is a Zn(2+) binding site. An intrachain disulfide couples Cys-200 to Cys-208.

Belongs to the somatotropin/prolactin family.

It localises to the secreted. Growth hormone plays an important role in growth control and is involved in the regulation of several anabolic processes. Implicated as an osmoregulatory substance important for seawater adaptation. The sequence is that of Somatotropin (gh) from Oncorhynchus tshawytscha (Chinook salmon).